The chain runs to 62 residues: Small ribosomal subunit protein bS21 (62 aa).

The disordered stretch occupies residues Tyr-38–Gly-62.

This sequence belongs to the bacterial ribosomal protein bS21 family.

The protein is Small ribosomal subunit protein bS21 of Gemmatimonas aurantiaca (strain DSM 14586 / JCM 11422 / NBRC 100505 / T-27).